Reading from the N-terminus, the 140-residue chain is Putative pre-16S rRNA nuclease (140 aa).

It belongs to the YqgF nuclease family.

The protein resides in the cytoplasm. Functionally, could be a nuclease involved in processing of the 5'-end of pre-16S rRNA. The chain is Putative pre-16S rRNA nuclease from Halothermothrix orenii (strain H 168 / OCM 544 / DSM 9562).